The primary structure comprises 393 residues: Staphopain B (393 aa).

The first 36 residues, 1–36 (MNSSCKTRVFNIISIIMVSMLILSLGAFANNNKAKA), serve as a signal peptide directing secretion. The propeptide occupies 37–219 (DSHSKQLEIN…KVEENEAIQE (183 aa)). Active-site residues include Cys243, His340, and Asn360.

This sequence belongs to the peptidase C47 family. In the cytoplasm, prematurely activated/folded SspB forms a stable non-covalent complex with SspC. In terms of processing, proteolytically cleaved by staphylococcal serine protease (SspA).

The protein resides in the secreted. Prematurely activated/folded staphopain B is inhibited by staphostatin B (SspC), which is probably required to protect staphylococcal cytoplasmic proteins from degradation by SspB. Cysteine protease that plays an important role in the inhibition of host innate immune response. Degrades host elastin, fibrogen, fibronectin and kininogen. Blocks phagocytosis of opsonised S.aureus by neutrophils and monocytes by inducing their death in a proteolytic activity-dependent manner. Decreases surface expression of the 'don't eat me' signal CD31 on neutrophils. Cleaves host galectin-3/LGALS3, thereby inhibiting the neutrophil-activating ability of the lectin. This Staphylococcus aureus (strain MRSA252) protein is Staphopain B (sspB).